Here is a 393-residue protein sequence, read N- to C-terminus: UDP-N-acetylglucosamine--N-acetylmuramyl-(pentapeptide) pyrophosphoryl-undecaprenol N-acetylglucosamine transferase (393 aa).

Residues 15 to 17, Asn129, Arg171, Ser211, and Gln322 contribute to the UDP-N-acetyl-alpha-D-glucosamine site; that span reads TAG.

Belongs to the glycosyltransferase 28 family. MurG subfamily.

It localises to the cell membrane. The catalysed reaction is di-trans,octa-cis-undecaprenyl diphospho-N-acetyl-alpha-D-muramoyl-L-alanyl-D-glutamyl-meso-2,6-diaminopimeloyl-D-alanyl-D-alanine + UDP-N-acetyl-alpha-D-glucosamine = di-trans,octa-cis-undecaprenyl diphospho-[N-acetyl-alpha-D-glucosaminyl-(1-&gt;4)]-N-acetyl-alpha-D-muramoyl-L-alanyl-D-glutamyl-meso-2,6-diaminopimeloyl-D-alanyl-D-alanine + UDP + H(+). Its pathway is cell wall biogenesis; peptidoglycan biosynthesis. Its function is as follows. Cell wall formation. Catalyzes the transfer of a GlcNAc subunit on undecaprenyl-pyrophosphoryl-MurNAc-pentapeptide (lipid intermediate I) to form undecaprenyl-pyrophosphoryl-MurNAc-(pentapeptide)GlcNAc (lipid intermediate II). The protein is UDP-N-acetylglucosamine--N-acetylmuramyl-(pentapeptide) pyrophosphoryl-undecaprenol N-acetylglucosamine transferase of Bifidobacterium longum (strain DJO10A).